Here is a 315-residue protein sequence, read N- to C-terminus: Hydroxysteroid 11-beta-dehydrogenase 1-like protein (315 aa).

The first 15 residues, 1–15, serve as a signal peptide directing secretion; sequence MKVLLLTGLGALFFA. NADP(+) contacts are provided by residues 36 to 62, 87 to 88, and 114 to 116; these read GANA…TAHT, DM, and NHI. Position 165 (serine 165) interacts with substrate. The active-site Proton acceptor is tyrosine 178. NADP(+) is bound by residues 178 to 182 and 211 to 217; these read YSAAK and GLRDRAS. Residues 221-286 form a disordered region; the sequence is AVRSSTSRPR…SKTEKNDGHL (66 aa). Basic and acidic residues predominate over residues 277-286; the sequence is SKTEKNDGHL.

This sequence belongs to the short-chain dehydrogenases/reductases (SDR) family. In terms of tissue distribution, highly expressed in the brain.

The protein localises to the secreted. The enzyme catalyses cortisone + NADPH + H(+) = cortisol + NADP(+). Its function is as follows. Unidirectional NADP(+)-dependent cortisol dehydrogenase (in vitro). This is Hydroxysteroid 11-beta-dehydrogenase 1-like protein (HSD11B1L) from Homo sapiens (Human).